We begin with the raw amino-acid sequence, 136 residues long: Protein NrdI (136 aa).

It belongs to the NrdI family.

Its function is as follows. Probably involved in ribonucleotide reductase function. This chain is Protein NrdI, found in Klebsiella pneumoniae subsp. pneumoniae (strain ATCC 700721 / MGH 78578).